The primary structure comprises 501 residues: Endoglucanase 8 (501 aa).

Residues 1–35 form the signal peptide; it reads MKPRSSRDGHNAAAAAALLLAALVLSGDVLPAVVA. D95 acts as the Nucleophile in catalysis. N-linked (GlcNAc...) asparagine glycosylation occurs at N298. The active site involves H414. N462 carries N-linked (GlcNAc...) asparagine glycosylation. The active site involves D465. N469 carries an N-linked (GlcNAc...) asparagine glycan. E474 is an active-site residue.

The protein belongs to the glycosyl hydrolase 9 (cellulase E) family.

Its subcellular location is the secreted. It carries out the reaction Endohydrolysis of (1-&gt;4)-beta-D-glucosidic linkages in cellulose, lichenin and cereal beta-D-glucans.. This Oryza sativa subsp. japonica (Rice) protein is Endoglucanase 8.